A 529-amino-acid polypeptide reads, in one-letter code: Peptide chain release factor 3 (529 aa).

Residues 11–280 (SKRRTFAIIS…GLVAWAPAPM (270 aa)) form the tr-type G domain. GTP contacts are provided by residues 20–27 (SHPDAGKT), 88–92 (DTPGH), and 142–145 (NKLD).

This sequence belongs to the TRAFAC class translation factor GTPase superfamily. Classic translation factor GTPase family. PrfC subfamily.

The protein resides in the cytoplasm. Increases the formation of ribosomal termination complexes and stimulates activities of RF-1 and RF-2. It binds guanine nucleotides and has strong preference for UGA stop codons. It may interact directly with the ribosome. The stimulation of RF-1 and RF-2 is significantly reduced by GTP and GDP, but not by GMP. In Pectobacterium carotovorum subsp. carotovorum (strain PC1), this protein is Peptide chain release factor 3.